The primary structure comprises 254 residues: Receptor expression-enhancing protein 2 (254 aa).

A run of 2 helical transmembrane segments spans residues 1 to 21 and 35 to 55; these read MVSWIISRLVVLIFGTLYPAY and YVKWMMYWIVFAFFTTAETLT. At serine 152 the chain carries Phosphoserine. The interval 194-254 is disordered; that stretch reads LSLRSSTSQP…KKSSGGGDSA (61 aa). Residues 205–219 show a composition bias toward basic and acidic residues; sequence PRTETSEDDLGDKAP.

Belongs to the DP1 family. Interacts with odorant receptor proteins.

Its subcellular location is the membrane. Functionally, required for endoplasmic reticulum (ER) network formation, shaping and remodeling. May enhance the cell surface expression of odorant receptors. The protein is Receptor expression-enhancing protein 2 (Reep2) of Mus musculus (Mouse).